A 263-amino-acid chain; its full sequence is Oxidoreductase UcpA (263 aa).

10-32 lines the NAD(+) pocket; the sequence is LITGASQGIGEGIARVFARHGAN. Residue serine 141 coordinates substrate. Tyrosine 155 functions as the Proton acceptor in the catalytic mechanism.

Belongs to the short-chain dehydrogenases/reductases (SDR) family.

The chain is Oxidoreductase UcpA (ucpA) from Salmonella typhi.